Reading from the N-terminus, the 127-residue chain is Large ribosomal subunit protein uL24 (127 aa).

The protein belongs to the universal ribosomal protein uL24 family. In terms of assembly, component of the large ribosomal subunit. Mature ribosomes consist of a small (40S) and a large (60S) subunit. The 40S subunit contains about 32 different proteins and 1 molecule of RNA (18S). The 60S subunit contains 45 different proteins and 3 molecules of RNA (25S, 5.8S and 5S).

It is found in the cytoplasm. Its function is as follows. Component of the ribosome, a large ribonucleoprotein complex responsible for the synthesis of proteins in the cell. The small ribosomal subunit (SSU) binds messenger RNAs (mRNAs) and translates the encoded message by selecting cognate aminoacyl-transfer RNA (tRNA) molecules. The large subunit (LSU) contains the ribosomal catalytic site termed the peptidyl transferase center (PTC), which catalyzes the formation of peptide bonds, thereby polymerizing the amino acids delivered by tRNAs into a polypeptide chain. The nascent polypeptides leave the ribosome through a tunnel in the LSU and interact with protein factors that function in enzymatic processing, targeting, and the membrane insertion of nascent chains at the exit of the ribosomal tunnel. This is Large ribosomal subunit protein uL24 from Candida albicans (strain SC5314 / ATCC MYA-2876) (Yeast).